The sequence spans 252 residues: Hydroxyacylglutathione hydrolase (252 aa).

The Zn(2+) site is built by His-54, His-56, Asp-58, His-59, His-113, Asp-132, and His-170.

The protein belongs to the metallo-beta-lactamase superfamily. Glyoxalase II family. Monomer. Zn(2+) is required as a cofactor.

It carries out the reaction an S-(2-hydroxyacyl)glutathione + H2O = a 2-hydroxy carboxylate + glutathione + H(+). It functions in the pathway secondary metabolite metabolism; methylglyoxal degradation; (R)-lactate from methylglyoxal: step 2/2. Thiolesterase that catalyzes the hydrolysis of S-D-lactoyl-glutathione to form glutathione and D-lactic acid. The polypeptide is Hydroxyacylglutathione hydrolase (Synechococcus sp. (strain JA-3-3Ab) (Cyanobacteria bacterium Yellowstone A-Prime)).